A 387-amino-acid chain; its full sequence is Methylthioribose-1-phosphate isomerase (387 aa).

Asp-257 acts as the Proton donor in catalysis.

Belongs to the eIF-2B alpha/beta/delta subunits family. MtnA subfamily.

It localises to the cytoplasm. The protein resides in the nucleus. The catalysed reaction is 5-(methylsulfanyl)-alpha-D-ribose 1-phosphate = 5-(methylsulfanyl)-D-ribulose 1-phosphate. It participates in amino-acid biosynthesis; L-methionine biosynthesis via salvage pathway; L-methionine from S-methyl-5-thio-alpha-D-ribose 1-phosphate: step 1/6. Its function is as follows. Catalyzes the interconversion of methylthioribose-1-phosphate (MTR-1-P) into methylthioribulose-1-phosphate (MTRu-1-P). In Neosartorya fischeri (strain ATCC 1020 / DSM 3700 / CBS 544.65 / FGSC A1164 / JCM 1740 / NRRL 181 / WB 181) (Aspergillus fischerianus), this protein is Methylthioribose-1-phosphate isomerase (mri1).